The primary structure comprises 570 residues: Formate--tetrahydrofolate ligase (570 aa).

An ATP-binding site is contributed by 65 to 72 (TPFGEGKT).

The protein belongs to the formate--tetrahydrofolate ligase family.

The enzyme catalyses (6S)-5,6,7,8-tetrahydrofolate + formate + ATP = (6R)-10-formyltetrahydrofolate + ADP + phosphate. The protein operates within one-carbon metabolism; tetrahydrofolate interconversion. This is Formate--tetrahydrofolate ligase from Shewanella sediminis (strain HAW-EB3).